The primary structure comprises 364 residues: 3-dehydroquinate synthase (364 aa).

NAD(+)-binding positions include 75–80, 109–113, 133–134, lysine 146, lysine 155, and 173–176; these read DGEQYK, GVIGD, TT, and TLDT. 3 residues coordinate Zn(2+): glutamate 188, histidine 251, and histidine 268.

The protein belongs to the sugar phosphate cyclases superfamily. Dehydroquinate synthase family. Co(2+) serves as cofactor. The cofactor is Zn(2+). Requires NAD(+) as cofactor.

It localises to the cytoplasm. The enzyme catalyses 7-phospho-2-dehydro-3-deoxy-D-arabino-heptonate = 3-dehydroquinate + phosphate. It functions in the pathway metabolic intermediate biosynthesis; chorismate biosynthesis; chorismate from D-erythrose 4-phosphate and phosphoenolpyruvate: step 2/7. In terms of biological role, catalyzes the conversion of 3-deoxy-D-arabino-heptulosonate 7-phosphate (DAHP) to dehydroquinate (DHQ). The protein is 3-dehydroquinate synthase of Dechloromonas aromatica (strain RCB).